The primary structure comprises 247 residues: Terpene cyclase adrI (247 aa).

5 helical membrane passes run 20 to 40 (VAEF…FSML), 51 to 71 (TGIF…FIYP), 76 to 96 (HWEG…FFII), 112 to 132 (NLYF…YSFA), and 141 to 161 (FFYG…AQIL). N-linked (GlcNAc...) asparagine glycosylation occurs at N164. 2 consecutive transmembrane segments (helical) span residues 179–199 (FGGF…GPWF) and 205–225 (KFYI…YYVI).

The protein belongs to the paxB family.

It localises to the membrane. Its pathway is secondary metabolite biosynthesis; terpenoid biosynthesis. In terms of biological role, terpene cyclase; part of the gene cluster that mediates the biosynthesis of andrastins, meroterpenoid compounds that exhibit inhibitory activity against ras farnesyltransferase, suggesting that they could be promising leads for antitumor agents. The first step of the pathway is the synthesis of 3,5-dimethylorsellinic acid (DMOA) by the polyketide synthase adrD via condensation of one acetyl-CoA starter unit with 3 malonyl-CoA units and 2 methylations. DMAO is then converted to farnesyl-DMAO by the prenyltransferase adrG. The methyltransferase adrK catalyzes the methylation of the carboxyl group of farnesyl-DMAO to farnesyl-DMAO methyl ester which is further converted to epoxyfarnesyl-DMAO methyl ester by the FAD-dependent monooxygenase adrH. The terpene cyclase adrI then catalyzes the carbon skeletal rearrangement to generate the andrastin E, the first compound in the pathway having the andrastin scaffold, with the tetracyclic ring system. The post-cyclization tailoring enzymes adrF, adrE, adrJ, and adrA, are involved in the conversion of andrastin E into andrastin A. The short chain dehydrogenase adrF is responsible for the oxidation of the C-3 a hydroxyl group of andrastin E to yield the corresponding ketone, andrastin D. The ketoreductase adrE stereoselectively reduces the carbonyl moiety to reverse the stereochemistry of the C-3 position to yield andrastin F. The acetyltransferase adrJ is the acetyltransferase that attaches the acetyl group to the C-3 hydroxyl group of andrastin F to yield andrastin C. Finally, the cytochrome P450 monooxygenase adrA catalyzes two sequential oxidation reactions of the C-23 methyl group, to generate the corresponding alcohol andrastin B, and aldehyde andrastin A. In Penicillium rubens (strain ATCC 28089 / DSM 1075 / NRRL 1951 / Wisconsin 54-1255) (Penicillium chrysogenum), this protein is Terpene cyclase adrI.